Reading from the N-terminus, the 358-residue chain is Carbamoyl phosphate synthase small chain (358 aa).

The segment at 1 to 168 (MKRLLLLEDG…TKLAYASPGV (168 aa)) is CPSase. The L-glutamine site is built by Ser45, Gly219, and Gly221. Positions 171–357 (NIVLVDFGLK…INMIDDFQQK (187 aa)) constitute a Glutamine amidotransferase type-1 domain. Cys246 acts as the Nucleophile in catalysis. The L-glutamine site is built by Met247, Gln250, Asn288, Gly290, and Tyr291. Residues His330 and Asp332 contribute to the active site.

The protein belongs to the CarA family. In terms of assembly, composed of two chains; the small (or glutamine) chain promotes the hydrolysis of glutamine to ammonia, which is used by the large (or ammonia) chain to synthesize carbamoyl phosphate. Tetramer of heterodimers (alpha,beta)4.

It carries out the reaction hydrogencarbonate + L-glutamine + 2 ATP + H2O = carbamoyl phosphate + L-glutamate + 2 ADP + phosphate + 2 H(+). It catalyses the reaction L-glutamine + H2O = L-glutamate + NH4(+). Its pathway is amino-acid biosynthesis; L-arginine biosynthesis; carbamoyl phosphate from bicarbonate: step 1/1. It functions in the pathway pyrimidine metabolism; UMP biosynthesis via de novo pathway; (S)-dihydroorotate from bicarbonate: step 1/3. Its function is as follows. Small subunit of the glutamine-dependent carbamoyl phosphate synthetase (CPSase). CPSase catalyzes the formation of carbamoyl phosphate from the ammonia moiety of glutamine, carbonate, and phosphate donated by ATP, constituting the first step of 2 biosynthetic pathways, one leading to arginine and/or urea and the other to pyrimidine nucleotides. The small subunit (glutamine amidotransferase) binds and cleaves glutamine to supply the large subunit with the substrate ammonia. This Streptococcus agalactiae serotype III (strain NEM316) protein is Carbamoyl phosphate synthase small chain.